The sequence spans 195 residues: Imidazoleglycerol-phosphate dehydratase (195 aa).

Belongs to the imidazoleglycerol-phosphate dehydratase family.

It localises to the cytoplasm. The enzyme catalyses D-erythro-1-(imidazol-4-yl)glycerol 3-phosphate = 3-(imidazol-4-yl)-2-oxopropyl phosphate + H2O. The protein operates within amino-acid biosynthesis; L-histidine biosynthesis; L-histidine from 5-phospho-alpha-D-ribose 1-diphosphate: step 6/9. This chain is Imidazoleglycerol-phosphate dehydratase, found in Cupriavidus taiwanensis (strain DSM 17343 / BCRC 17206 / CCUG 44338 / CIP 107171 / LMG 19424 / R1) (Ralstonia taiwanensis (strain LMG 19424)).